The primary structure comprises 98 residues: Integration host factor subunit alpha (98 aa).

Residues 52 to 71 (FDLRDKNQRPGRNPKTGEDI) are disordered.

The protein belongs to the bacterial histone-like protein family. As to quaternary structure, heterodimer of an alpha and a beta chain.

This protein is one of the two subunits of integration host factor, a specific DNA-binding protein that functions in genetic recombination as well as in transcriptional and translational control. The polypeptide is Integration host factor subunit alpha (Photorhabdus laumondii subsp. laumondii (strain DSM 15139 / CIP 105565 / TT01) (Photorhabdus luminescens subsp. laumondii)).